Consider the following 305-residue polypeptide: ATP synthase gamma chain (305 aa).

It belongs to the ATPase gamma chain family. F-type ATPases have 2 components, CF(1) - the catalytic core - and CF(0) - the membrane proton channel. CF(1) has five subunits: alpha(3), beta(3), gamma(1), delta(1), epsilon(1). CF(0) has three main subunits: a, b and c.

The protein resides in the cell membrane. In terms of biological role, produces ATP from ADP in the presence of a proton gradient across the membrane. The gamma chain is believed to be important in regulating ATPase activity and the flow of protons through the CF(0) complex. In Streptomyces coelicolor (strain ATCC BAA-471 / A3(2) / M145), this protein is ATP synthase gamma chain.